The primary structure comprises 344 residues: GTP 3',8-cyclase (344 aa).

In terms of domain architecture, Radical SAM core spans 19-239 (PFGRTIDYLR…ANYTLTDLPD (221 aa)). GTP is bound at residue Arg28. [4Fe-4S] cluster is bound by residues Cys35 and Cys39. Tyr41 serves as a coordination point for S-adenosyl-L-methionine. Cys42 contacts [4Fe-4S] cluster. Arg77 contributes to the GTP binding site. Gly81 is an S-adenosyl-L-methionine binding site. Thr111 serves as a coordination point for GTP. Ser135 is an S-adenosyl-L-methionine binding site. Lys171 provides a ligand contact to GTP. Position 205 (Met205) interacts with S-adenosyl-L-methionine. 2 residues coordinate [4Fe-4S] cluster: Cys268 and Cys271. 273 to 275 (RVR) contacts GTP. Cys285 lines the [4Fe-4S] cluster pocket.

Belongs to the radical SAM superfamily. MoaA family. Monomer and homodimer. It depends on [4Fe-4S] cluster as a cofactor.

The enzyme catalyses GTP + AH2 + S-adenosyl-L-methionine = (8S)-3',8-cyclo-7,8-dihydroguanosine 5'-triphosphate + 5'-deoxyadenosine + L-methionine + A + H(+). Its pathway is cofactor biosynthesis; molybdopterin biosynthesis. In terms of biological role, catalyzes the cyclization of GTP to (8S)-3',8-cyclo-7,8-dihydroguanosine 5'-triphosphate. This chain is GTP 3',8-cyclase, found in Rhodopseudomonas palustris (strain ATCC BAA-98 / CGA009).